Consider the following 159-residue polypeptide: Ribosomal RNA large subunit methyltransferase H (159 aa).

Residues L76, G108, and 127–132 (FGRLTL) contribute to the S-adenosyl-L-methionine site.

Belongs to the RNA methyltransferase RlmH family. In terms of assembly, homodimer.

The protein resides in the cytoplasm. The catalysed reaction is pseudouridine(1915) in 23S rRNA + S-adenosyl-L-methionine = N(3)-methylpseudouridine(1915) in 23S rRNA + S-adenosyl-L-homocysteine + H(+). Its function is as follows. Specifically methylates the pseudouridine at position 1915 (m3Psi1915) in 23S rRNA. The polypeptide is Ribosomal RNA large subunit methyltransferase H (Listeria welshimeri serovar 6b (strain ATCC 35897 / DSM 20650 / CCUG 15529 / CIP 8149 / NCTC 11857 / SLCC 5334 / V8)).